Consider the following 91-residue polypeptide: Small ribosomal subunit protein uS19m (91 aa).

The protein belongs to the universal ribosomal protein uS19 family. Component of the mitochondrial small ribosomal subunit (mt-SSU). Mature yeast 74S mitochondrial ribosomes consist of a small (37S) and a large (54S) subunit. The 37S small subunit contains a 15S ribosomal RNA (15S mt-rRNA) and 34 different proteins. The 54S large subunit contains a 21S rRNA (21S mt-rRNA) and 46 different proteins.

It localises to the mitochondrion. Component of the mitochondrial ribosome (mitoribosome), a dedicated translation machinery responsible for the synthesis of mitochondrial genome-encoded proteins, including at least some of the essential transmembrane subunits of the mitochondrial respiratory chain. The mitoribosomes are attached to the mitochondrial inner membrane and translation products are cotranslationally integrated into the membrane. The polypeptide is Small ribosomal subunit protein uS19m (RSM19) (Saccharomyces cerevisiae (strain ATCC 204508 / S288c) (Baker's yeast)).